The sequence spans 874 residues: Alanine--tRNA ligase (874 aa).

Residues His-563, His-567, Cys-664, and His-668 each contribute to the Zn(2+) site.

This sequence belongs to the class-II aminoacyl-tRNA synthetase family. Zn(2+) is required as a cofactor.

The protein resides in the cytoplasm. The enzyme catalyses tRNA(Ala) + L-alanine + ATP = L-alanyl-tRNA(Ala) + AMP + diphosphate. Catalyzes the attachment of alanine to tRNA(Ala) in a two-step reaction: alanine is first activated by ATP to form Ala-AMP and then transferred to the acceptor end of tRNA(Ala). Also edits incorrectly charged Ser-tRNA(Ala) and Gly-tRNA(Ala) via its editing domain. The chain is Alanine--tRNA ligase from Methylobacillus flagellatus (strain ATCC 51484 / DSM 6875 / VKM B-1610 / KT).